A 329-amino-acid polypeptide reads, in one-letter code: DNA-directed RNA polymerase subunit alpha (329 aa).

The interval 1-235 is alpha N-terminal domain (alpha-NTD); the sequence is MQGSVTEFLK…EQLEAFVDLR (235 aa). The alpha C-terminal domain (alpha-CTD) stretch occupies residues 249 to 329; that stretch reads FDPILLRPVD…NWPPASIADE (81 aa).

This sequence belongs to the RNA polymerase alpha chain family. In terms of assembly, homodimer. The RNAP catalytic core consists of 2 alpha, 1 beta, 1 beta' and 1 omega subunit. When a sigma factor is associated with the core the holoenzyme is formed, which can initiate transcription.

It catalyses the reaction RNA(n) + a ribonucleoside 5'-triphosphate = RNA(n+1) + diphosphate. In terms of biological role, DNA-dependent RNA polymerase catalyzes the transcription of DNA into RNA using the four ribonucleoside triphosphates as substrates. In Shigella dysenteriae serotype 1 (strain Sd197), this protein is DNA-directed RNA polymerase subunit alpha.